A 542-amino-acid chain; its full sequence is Chaperonin GroEL 1 (542 aa).

ATP contacts are provided by residues 30-33 (TLGP), lysine 51, 87-91 (DGTTT), glycine 415, and aspartate 496.

The protein belongs to the chaperonin (HSP60) family. Forms a cylinder of 14 subunits composed of two heptameric rings stacked back-to-back. Interacts with the co-chaperonin GroES.

The protein resides in the cytoplasm. It carries out the reaction ATP + H2O + a folded polypeptide = ADP + phosphate + an unfolded polypeptide.. Its function is as follows. Together with its co-chaperonin GroES, plays an essential role in assisting protein folding. The GroEL-GroES system forms a nano-cage that allows encapsulation of the non-native substrate proteins and provides a physical environment optimized to promote and accelerate protein folding. In Sinorhizobium fredii (strain NBRC 101917 / NGR234), this protein is Chaperonin GroEL 1.